The chain runs to 237 residues: tRNA (guanine-N(7)-)-methyltransferase (237 aa).

S-adenosyl-L-methionine contacts are provided by glutamate 68, glutamate 93, aspartate 120, and aspartate 143. The active site involves aspartate 143. Substrate is bound by residues lysine 147, aspartate 179, and 216-219 (TKFE).

This sequence belongs to the class I-like SAM-binding methyltransferase superfamily. TrmB family.

The enzyme catalyses guanosine(46) in tRNA + S-adenosyl-L-methionine = N(7)-methylguanosine(46) in tRNA + S-adenosyl-L-homocysteine. It functions in the pathway tRNA modification; N(7)-methylguanine-tRNA biosynthesis. In terms of biological role, catalyzes the formation of N(7)-methylguanine at position 46 (m7G46) in tRNA. In Shewanella pealeana (strain ATCC 700345 / ANG-SQ1), this protein is tRNA (guanine-N(7)-)-methyltransferase.